We begin with the raw amino-acid sequence, 851 residues long: Protein translocase subunit SecA (851 aa).

ATP is bound by residues Gln88, 106–110, and Asp496; that span reads GEGKT. Residues Cys828, Cys830, Cys839, and His840 each coordinate Zn(2+).

Belongs to the SecA family. In terms of assembly, monomer and homodimer. Part of the essential Sec protein translocation apparatus which comprises SecA, SecYEG and auxiliary proteins SecDF-YajC and YidC. It depends on Zn(2+) as a cofactor.

The protein resides in the cell inner membrane. Its subcellular location is the cytoplasm. It catalyses the reaction ATP + H2O + cellular proteinSide 1 = ADP + phosphate + cellular proteinSide 2.. Part of the Sec protein translocase complex. Interacts with the SecYEG preprotein conducting channel. Has a central role in coupling the hydrolysis of ATP to the transfer of proteins into and across the cell membrane, serving as an ATP-driven molecular motor driving the stepwise translocation of polypeptide chains across the membrane. The chain is Protein translocase subunit SecA from Helicobacter hepaticus (strain ATCC 51449 / 3B1).